The following is a 368-amino-acid chain: UDP-N-acetylglucosamine--N-acetylmuramyl-(pentapeptide) pyrophosphoryl-undecaprenol N-acetylglucosamine transferase (368 aa).

UDP-N-acetyl-alpha-D-glucosamine-binding positions include 13-15 (TGG), asparagine 124, arginine 167, serine 195, and glutamine 296.

Belongs to the glycosyltransferase 28 family. MurG subfamily.

It localises to the cell inner membrane. The enzyme catalyses di-trans,octa-cis-undecaprenyl diphospho-N-acetyl-alpha-D-muramoyl-L-alanyl-D-glutamyl-meso-2,6-diaminopimeloyl-D-alanyl-D-alanine + UDP-N-acetyl-alpha-D-glucosamine = di-trans,octa-cis-undecaprenyl diphospho-[N-acetyl-alpha-D-glucosaminyl-(1-&gt;4)]-N-acetyl-alpha-D-muramoyl-L-alanyl-D-glutamyl-meso-2,6-diaminopimeloyl-D-alanyl-D-alanine + UDP + H(+). It functions in the pathway cell wall biogenesis; peptidoglycan biosynthesis. In terms of biological role, cell wall formation. Catalyzes the transfer of a GlcNAc subunit on undecaprenyl-pyrophosphoryl-MurNAc-pentapeptide (lipid intermediate I) to form undecaprenyl-pyrophosphoryl-MurNAc-(pentapeptide)GlcNAc (lipid intermediate II). This is UDP-N-acetylglucosamine--N-acetylmuramyl-(pentapeptide) pyrophosphoryl-undecaprenol N-acetylglucosamine transferase from Maricaulis maris (strain MCS10) (Caulobacter maris).